The primary structure comprises 272 residues: Ethanolamine ammonia-lyase small subunit (272 aa).

The adenosylcob(III)alamin site is built by Val161, Glu182, and Cys211.

The protein belongs to the EutC family. The basic unit is a heterodimer which dimerizes to form tetramers. The heterotetramers trimerize; 6 large subunits form a core ring with 6 small subunits projecting outwards. It depends on adenosylcob(III)alamin as a cofactor.

It localises to the bacterial microcompartment. It carries out the reaction ethanolamine = acetaldehyde + NH4(+). The protein operates within amine and polyamine degradation; ethanolamine degradation. Functionally, catalyzes the deamination of various vicinal amino-alcohols to oxo compounds. Allows this organism to utilize ethanolamine as the sole source of nitrogen and carbon in the presence of external vitamin B12. The polypeptide is Ethanolamine ammonia-lyase small subunit (Pseudomonas putida (strain ATCC 700007 / DSM 6899 / JCM 31910 / BCRC 17059 / LMG 24140 / F1)).